The following is a 159-amino-acid chain: Cytochrome c-type biogenesis protein CcmE (159 aa).

Residues 1 to 7 (MTPRQRR) are Cytoplasmic-facing. Residues 8–28 (LGMLLAALACAGIALALVLNA) form a helical; Signal-anchor for type II membrane protein membrane-spanning segment. The Periplasmic segment spans residues 29-159 (FRSNLVFFFS…LAEGERETQR (131 aa)). The heme site is built by H123 and Y127.

The protein belongs to the CcmE/CycJ family.

It localises to the cell inner membrane. Its function is as follows. Heme chaperone required for the biogenesis of c-type cytochromes. Transiently binds heme delivered by CcmC and transfers the heme to apo-cytochromes in a process facilitated by CcmF and CcmH. The protein is Cytochrome c-type biogenesis protein CcmE of Cupriavidus pinatubonensis (strain JMP 134 / LMG 1197) (Cupriavidus necator (strain JMP 134)).